Consider the following 434-residue polypeptide: MTQDVVTVSSQTAGTIKESGTHSNPDNKTTSPSTWKSLSKYACFDSEAERQWWNDSGALIARFLDIAKGDIHEQYQYLLFVREVVIPALGPYPPIRRCCINITEIGIELSLNYQGPGKPVFRVSLDPISEMSGTPMDPLNIDTVNDTVARLASIGLKDFDRTLHYHFMSEFCMPEEKAKTYQQDSREPMAWSQMILGFDFKDGNVVTKEYIWTRHAAHASGLHPHAIIRRAISRVDDQMRCSAAVNLVLEYMETFNADIPVPFFSWDLIDPSESRLKLYGIAWQWSWAKVEEVCTLGGKLQGPATDRSIGLLRKLWGILKLDEFTPSMAFTWNYEILPGQTHPNVRIYFAICDRSDEEVAQAVSQWFNLLGWHETARSYPETLRYLQPNRDLKKTNTAHTWLSITVTEKGVYTSLYYHPLGNGPDDHNIRKTWF.

2 stretches are compositionally biased toward polar residues: residues 1 to 14 and 21 to 35; these read MTQD…QTAG and THSN…PSTW. Residues 1–35 are disordered; the sequence is MTQDVVTVSSQTAGTIKESGTHSNPDNKTTSPSTW. L-tryptophan contacts are provided by residues 104–105 and Glu108; that span reads EI. Positions 122, 208, 275, 277, 279, and 348 each coordinate substrate.

Belongs to the tryptophan dimethylallyltransferase family.

It catalyses the reaction yaequinolone E + dimethylallyl diphosphate + H2O = [(1'E)-3'-hydroxy-3',7'-dimethylocta-1',6'-dien-1'-yl]-quinolinone B + diphosphate. The protein operates within secondary metabolite biosynthesis. Its pathway is alkaloid biosynthesis. It functions in the pathway mycotoxin biosynthesis. Functionally, prenyltransferase; part of the gene cluster that mediates the biosynthesis of penigequinolones, potent insecticidal alkaloids that contain a highly modified 10-carbon prenyl group. The first stage is catalyzed by the nonribosomal peptide synthetase penN that condenses anthranilic acid and O-methyl-L-tyrosine to produce 4'-methoxycyclopeptin. 4'-methoxycyclopeptin is then converted to 4'-methoxydehydrocyclopeptin by the ketoglutarate-dependent dioxygenase penM through dehydrogenation to form a double bond between C-alpha and C-beta of the O-methyltyrosine side chain. PenM also converts its first product methoxydehydrocyclopeptin to 4'-methoxycyclopenin. The following conversion of 4'methoxycyclopenin into 4'-methoxyviridicatin is catalyzed by the cyclopenase penL. 4'-methoxyviridicatin is the precursor of quinolone natural products, and is further converted to quinolinone B. The prenyltransferase penI then catalyzes the canonical Friedel-Crafts alkylation of quinolinone B with dimethylallyl cation to yield dimethylallyl quinolone, which is subjected to FAD-dependent dehydrogenation by the FAD-linked oxidoreductase penH to yield conjugated aryl diene. The delta(3') double bond then serves as the site of the second alkylation with DMAPP catalyzed by the prenyltransferase penG to yield a carbenium ion intermediate, which can be attacked by H(2)O to yield a styrenyl quinolone containing a C3'-hydroxyprenyl chain, or undergo cyclization to yield yaequinolones J1 and J2. The conversion of the styrenyl quinolone into the tetrahydrofuran-containing yaequinolone C is performed by the FAD-dependent monooxygenase penE and involves epoxidation of the terminal C7'-C8' olefin, followed by epoxide ring opening initiated by the C3' hydroxyl group. The predicted cysteine hydrolase penJ acts as an epoxide hydrolase that enhances the rate of the 5-exo-tet cyclization step, increasing the yield of yaequinolone C. PenF catalyzes the cationic rearrangement of the epoxide formed by penE (before ring opening to produce yaequinolone C) into yaequinolone D. Finally, the short-chain dehydrogenase/reductase (SDR)-like reductase penD, catalyzes both the dehydration of yaequinolone D and the reduction of the resulting oxonium to yield penigequinolone. The polypeptide is Prenyltransferase penG (Penicillium thymicola).